A 586-amino-acid polypeptide reads, in one-letter code: Chaperonin 60 subunit alpha 1, chloroplastic (586 aa).

The transit peptide at 1-46 (MASANALSSASVLCSSRQSKLGGGNQQQGQRVSYNKRTIRRFSVRA) directs the protein to the chloroplast. Ser90 is subject to Phosphoserine.

Belongs to the chaperonin (HSP60) family. Part of the Cpn60 complex composed of 7 alpha and 7 beta subunits. This complex shows ATPase activity. The Cpn60 complex interacts with the Cpn10 complex. In terms of tissue distribution, expressed in leaves, stems, siliques and flowers.

Its subcellular location is the plastid. The protein resides in the chloroplast. Binds RuBisCO small and large subunits and is implicated in the assembly of the enzyme oligomer. Involved in protein assisted folding. Required for proper chloroplast development. The polypeptide is Chaperonin 60 subunit alpha 1, chloroplastic (CPN60A1) (Arabidopsis thaliana (Mouse-ear cress)).